Consider the following 145-residue polypeptide: Transcription antitermination protein NusB (145 aa).

Belongs to the NusB family.

Its function is as follows. Involved in transcription antitermination. Required for transcription of ribosomal RNA (rRNA) genes. Binds specifically to the boxA antiterminator sequence of the ribosomal RNA (rrn) operons. In Psychromonas ingrahamii (strain DSM 17664 / CCUG 51855 / 37), this protein is Transcription antitermination protein NusB.